Consider the following 422-residue polypeptide: Zinc finger and BTB domain-containing protein 42 (422 aa).

The BTB domain maps to 24 to 92; it reads CDCTVLVGDA…MYEGRLDLRS (69 aa). Disordered stretches follow at residues 121 to 141, 166 to 188, and 207 to 256; these read KDRS…QPPC, AALP…DQAL, and LQTP…AAKG. Positions 243-252 are enriched in pro residues; that stretch reads HSPPKPPPVP. C2H2-type zinc fingers lie at residues 294–316, 334–356, 362–384, and 390–413; these read CICP…LSAH, PTCP…ERTH, YTCV…TVVH, and HACR…RKFH.

The protein belongs to the krueppel C2H2-type zinc-finger protein family. ZBTB18 subfamily. In terms of tissue distribution, expressed in skeletal muscle (at protein level).

Its subcellular location is the cytoplasm. The protein localises to the nucleus. It is found in the nucleoplasm. Functionally, transcriptional repressor. Specifically binds DNA and probably acts by recruiting chromatin remodeling multiprotein complexes. The sequence is that of Zinc finger and BTB domain-containing protein 42 (ZBTB42) from Homo sapiens (Human).